A 253-amino-acid polypeptide reads, in one-letter code: Chitooligosaccharide deacetylase (253 aa).

Positions 61 and 126 each coordinate Mg(2+).

Belongs to the YdjC deacetylase family. ChbG subfamily. As to quaternary structure, homodimer. Mg(2+) serves as cofactor.

It is found in the cytoplasm. It carries out the reaction N,N'-diacetylchitobiose + H2O = N-acetyl-beta-D-glucosaminyl-(1-&gt;4)-D-glucosamine + acetate. The catalysed reaction is diacetylchitobiose-6'-phosphate + H2O = N'-monoacetylchitobiose-6'-phosphate + acetate. The protein operates within glycan degradation; chitin degradation. In terms of biological role, involved in the degradation of chitin. ChbG is essential for growth on the acetylated chitooligosaccharides chitobiose and chitotriose but is dispensable for growth on cellobiose and chitosan dimer, the deacetylated form of chitobiose. Deacetylation of chitobiose-6-P and chitotriose-6-P is necessary for both the activation of the chb promoter by the regulatory protein ChbR and the hydrolysis of phosphorylated beta-glucosides by the phospho-beta-glucosidase ChbF. Catalyzes the removal of only one acetyl group from chitobiose-6-P to yield monoacetylchitobiose-6-P, the inducer of ChbR and the substrate of ChbF. The chain is Chitooligosaccharide deacetylase from Serratia marcescens.